A 411-amino-acid chain; its full sequence is tRNA (uracil(54)-C(5))-methyltransferase (411 aa).

Residues Cys-62, Cys-68, Cys-71, and Cys-138 each contribute to the [4Fe-4S] cluster site. Residues Gln-254, Tyr-280, Thr-285, 301–302 (DS), Asp-328, and Asp-342 each bind S-adenosyl-L-methionine. The active-site Nucleophile is the Cys-369. Glu-402 acts as the Proton acceptor in catalysis.

This sequence belongs to the class I-like SAM-binding methyltransferase superfamily. RNA M5U methyltransferase family.

It carries out the reaction uridine(54) in tRNA + S-adenosyl-L-methionine = 5-methyluridine(54) in tRNA + S-adenosyl-L-homocysteine + H(+). Its function is as follows. Catalyzes the formation of 5-methyl-uridine at position 54 (m5U54) in tRNA. The chain is tRNA (uracil(54)-C(5))-methyltransferase from Pyrococcus furiosus (strain ATCC 43587 / DSM 3638 / JCM 8422 / Vc1).